The primary structure comprises 474 residues: Glutamyl-tRNA(Gln) amidotransferase subunit A (474 aa).

Residues lysine 76 and serine 151 each act as charge relay system in the active site. Serine 175 functions as the Acyl-ester intermediate in the catalytic mechanism.

Belongs to the amidase family. GatA subfamily. As to quaternary structure, heterotrimer of A, B and C subunits.

The catalysed reaction is L-glutamyl-tRNA(Gln) + L-glutamine + ATP + H2O = L-glutaminyl-tRNA(Gln) + L-glutamate + ADP + phosphate + H(+). Functionally, allows the formation of correctly charged Gln-tRNA(Gln) through the transamidation of misacylated Glu-tRNA(Gln) in organisms which lack glutaminyl-tRNA synthetase. The reaction takes place in the presence of glutamine and ATP through an activated gamma-phospho-Glu-tRNA(Gln). The polypeptide is Glutamyl-tRNA(Gln) amidotransferase subunit A (Chlorobium chlorochromatii (strain CaD3)).